A 764-amino-acid chain; its full sequence is Thyrotropin receptor (764 aa).

The signal sequence occupies residues 1-21; sequence MSLTPLLQLALLLALPRSLRG. The Extracellular portion of the chain corresponds to 22–413; sequence KGCPSPPCEC…EFNPCEDIMG (392 aa). Cys-31 and Cys-41 are oxidised to a cystine. 2 N-linked (GlcNAc...) asparagine glycosylation sites follow: Asn-77 and Asn-99. 6 LRR repeats span residues 125-150, 151-174, 176-199, 201-223, 225-248, and 250-271; these read LPLL…VYST, DVFF…AFQG, CNET…AFNG, KLDA…AFGG, FSGP…GLEH, and KELI…SFLH. N-linked (GlcNAc...) asparagine glycans are attached at residues Asn-177 and Asn-198. Asn-302 carries an N-linked (GlcNAc...) asparagine glycan. Tyr-385 is modified (sulfotyrosine). Residues 414–441 form a helical membrane-spanning segment; the sequence is YRFLRIVVWFVSLLALLGNVFVLVILLT. The Cytoplasmic portion of the chain corresponds to 442 to 450; the sequence is SHYKLTVPR. A helical transmembrane segment spans residues 451–473; that stretch reads FLMCNLAFADFCMGMYLLLIASV. Residues 474-494 lie on the Extracellular side of the membrane; that stretch reads DLYTQSEYYNHAIDWQTGPGC. Cysteines 494 and 569 form a disulfide. Residues 495 to 517 form a helical membrane-spanning segment; it reads NTAGFFTVFASELSVYTLTVITL. The Cytoplasmic segment spans residues 518–537; that stretch reads ERWYAITFAMRLDRKIRLRH. Residues 538–560 traverse the membrane as a helical segment; it reads AYAIMAGGWVCCFLLALLPLVGI. Residues 561–580 lie on the Extracellular side of the membrane; sequence SSYAKVSICLPMDTETPLAL. Residues 581–602 traverse the membrane as a helical segment; that stretch reads AYIILVLLLNIVAFTIVCSCYV. Topologically, residues 603–625 are cytoplasmic; it reads KIYITVRNPQYNPGDKDTKIAKR. The chain crosses the membrane as a helical span at residues 626 to 649; it reads MAVLIFTDFMCMAPISFYALSALM. The Extracellular portion of the chain corresponds to 650–660; sequence NKPLITVTNSK. Residues 661-682 form a helical membrane-spanning segment; the sequence is ILLVLFYPLNSCANPFLYAIFT. Topologically, residues 683–764 are cytoplasmic; sequence KAFQRDVFIL…ISKEYKQPVL (82 aa). The PDZ-binding signature appears at 762-764; sequence PVL.

Belongs to the G-protein coupled receptor 1 family. FSH/LSH/TSH subfamily. In terms of assembly, interacts with heterodimer GPHA2:GPHB5; this interaction stimulates cAMP production. Interacts (via the PDZ-binding motif) with SCRIB; regulates TSHR trafficking and function. Post-translationally, glycosylated. In terms of processing, sulfated. Sulfation on Tyr-385 plays a role in thyrotropin receptor binding and activation. As to expression, expressed in thyroide cells (at protein level).

It is found in the cell membrane. The protein resides in the basolateral cell membrane. Receptor for the thyroid-stimulating hormone (TSH) or thyrotropin. Also acts as a receptor for the heterodimeric glycoprotein hormone (GPHA2:GPHB5) or thyrostimulin. The activity of this receptor is mediated by G proteins which activate adenylate cyclase. Plays a central role in controlling thyroid cell metabolism. The chain is Thyrotropin receptor (TSHR) from Sus scrofa (Pig).